A 498-amino-acid chain; its full sequence is ATP synthase subunit beta, chloroplastic (498 aa).

Residue 172 to 179 participates in ATP binding; that stretch reads GGAGVGKT.

The protein belongs to the ATPase alpha/beta chains family. As to quaternary structure, F-type ATPases have 2 components, CF(1) - the catalytic core - and CF(0) - the membrane proton channel. CF(1) has five subunits: alpha(3), beta(3), gamma(1), delta(1), epsilon(1). CF(0) has four main subunits: a(1), b(1), b'(1) and c(9-12).

It localises to the plastid. It is found in the chloroplast thylakoid membrane. It carries out the reaction ATP + H2O + 4 H(+)(in) = ADP + phosphate + 5 H(+)(out). In terms of biological role, produces ATP from ADP in the presence of a proton gradient across the membrane. The catalytic sites are hosted primarily by the beta subunits. The sequence is that of ATP synthase subunit beta, chloroplastic from Nymphaea alba (White water-lily).